Reading from the N-terminus, the 122-residue chain is Large ribosomal subunit protein uL14 (122 aa).

The protein belongs to the universal ribosomal protein uL14 family. In terms of assembly, part of the 50S ribosomal subunit. Forms a cluster with proteins L3 and L19. In the 70S ribosome, L14 and L19 interact and together make contacts with the 16S rRNA in bridges B5 and B8.

Binds to 23S rRNA. Forms part of two intersubunit bridges in the 70S ribosome. The chain is Large ribosomal subunit protein uL14 from Acinetobacter baylyi (strain ATCC 33305 / BD413 / ADP1).